A 78-amino-acid polypeptide reads, in one-letter code: TP53-regulated inhibitor of apoptosis 1 (78 aa).

A coiled-coil region spans residues 1-52 (MNSVGEECTDMKREYDQCFNRWFAEKFLKGECSGDPCTELFRRYRDCVQKAI). Positions 5–55 (GEECTDMKREYDQCFNRWFAEKFLKGECSGDPCTELFRRYRDCVQKAIKDK) constitute a CHCH domain. 2 consecutive short sequence motifs (cx9C motif) follow at residues 8–18 (CTDMKREYDQC) and 37–47 (CTELFRRYRDC). 2 disulfides stabilise this stretch: C8/C47 and C18/C37.

It belongs to the TRIAP1/MDM35 family. In terms of assembly, monomer. Forms a complex with prelid1 in the mitochondrion intermembrane space. Interacts with prelid3a. As to expression, expressed in the developing pronephros.

It localises to the mitochondrion. Its subcellular location is the mitochondrion intermembrane space. The catalysed reaction is a 1,2-diacyl-sn-glycero-3-phosphate(in) = a 1,2-diacyl-sn-glycero-3-phosphate(out). Its function is as follows. Involved in the modulation of the mitochondrial apoptotic pathway by ensuring the accumulation of cardiolipin (CL) in mitochondrial membranes. The triap1:prelid1 complex probably functions as a phosphatidic acid (PA) transporter across the mitochondrion intermembrane space to provide PA for cardiolipin CL synthesis in the inner membrane. Likewise, the triap1:prelid3a complex mediates the transfer of phosphatidic acid (PA) between liposomes (in vitro) and probably functions as a PA transporter across the mitochondrion intermembrane space (in vivo). Mediates cell survival by inhibiting activation of caspase-9 which prevents induction of apoptosis. Required for pronephros development; probably involved at an early stage in the formation of pronephric components derived from the somatic layer. This chain is TP53-regulated inhibitor of apoptosis 1, found in Xenopus tropicalis (Western clawed frog).